Consider the following 248-residue polypeptide: Mannose-binding protein C (248 aa).

A signal peptide spans 1-20 (MSLFPSLTLLLLSVVATSYS). The Collagen-like domain occupies 42 to 99 (GINGFPGKDGRDGTKGEKGEPGQGLRGLQGPPGKLGPPGNPGSSGSPGPKGQKGDPGE). Residues 43–111 (INGFPGKDGR…DCESSLAASE (69 aa)) are disordered. Pro47 carries the 4-hydroxyproline modification. The segment covering 49 to 61 (KDGRDGTKGEKGE) has biased composition (basic and acidic residues). Pro73, Pro79, Pro82, and Pro88 each carry 4-hydroxyproline. Over residues 82–91 (PGSSGSPGPK) the composition is skewed to low complexity. A coiled-coil region spans residues 112–130 (RKALQTEMARIKKWLTFSL). The C-type lectin domain occupies 134 to 245 (VGNKFFLTNG…CSSSHLALCE (112 aa)). Cystine bridges form between Cys155–Cys244 and Cys222–Cys236.

As to quaternary structure, oligomeric complex of 3 or more homotrimers. Interacts with MASP1 and MASP2. Interacts with MEP1A and MEP1B and may inhibit their catalytic activity. Post-translationally, hydroxylation on proline residues within the sequence motif, GXPG, is most likely to be 4-hydroxy as this fits the requirement for 4-hydroxylation in vertebrates.

It localises to the secreted. In terms of biological role, calcium-dependent lectin involved in innate immune defense. Binds mannose, fucose and N-acetylglucosamine on different microorganisms and activates the lectin complement pathway. Binds to late apoptotic cells, as well as to apoptotic blebs and to necrotic cells, but not to early apoptotic cells, facilitating their uptake by macrophages. In Macaca fascicularis (Crab-eating macaque), this protein is Mannose-binding protein C (MBL2).